The chain runs to 352 residues: Histidinol-phosphate aminotransferase (352 aa).

Lys221 carries the post-translational modification N6-(pyridoxal phosphate)lysine.

Belongs to the class-II pyridoxal-phosphate-dependent aminotransferase family. Histidinol-phosphate aminotransferase subfamily. In terms of assembly, homodimer. Pyridoxal 5'-phosphate serves as cofactor.

It carries out the reaction L-histidinol phosphate + 2-oxoglutarate = 3-(imidazol-4-yl)-2-oxopropyl phosphate + L-glutamate. It participates in amino-acid biosynthesis; L-histidine biosynthesis; L-histidine from 5-phospho-alpha-D-ribose 1-diphosphate: step 7/9. The polypeptide is Histidinol-phosphate aminotransferase (Staphylococcus aureus (strain MSSA476)).